A 509-amino-acid polypeptide reads, in one-letter code: MSRYLHTLLKAIDLQVRSGLANPEIKNLSTDSREIEKGDLFLGLDGEKVDGGTFWAKAIERGACAAIISKKASLLNPPTNEDPVVILPEPVSLFMGKLAADFWGKPSSEICLIGITGTNGKTTTSFLIEFLTTSLGHPSALFGTLINRWPNYEETSKYTTTFAVPLQAKLRKAVQAGVEYGAMEVSSHALSQNRVAGCDFNGAIFTNLSRDHLDYHDSMESYFEAKASLFRSHLIDDDGPRSVINIDDKWGSILAKELNKKCWTCSLKENSQIREKPDLYISNLQIMQDGYMGKLHTPFGVGNFISPLIGEFNLMNMLQAIGILVQRGLPLNDLLEALNKFPGVPGRMQLINMDGFKVKDGYPLVIVDYAHTPDGLQNALIASRSLTKKRLICVFGCGGDRDKGKRSKMGEVAAKFADYIVVTSDNPRQEDPIEIIKDIQKGITIDSEISVEPERSIAIQFAIAKAKKNDVVLIAGKGHEDYQILKDQTIYFDDREQARKALSLRTDVI.

Ser-32 is a UDP-N-acetyl-alpha-D-muramoyl-L-alanyl-D-glutamate binding site. Position 117-123 (Gly-117–Thr-123) interacts with ATP. Residues Thr-159 to Thr-160, Ser-186, Gln-192, and Arg-194 each bind UDP-N-acetyl-alpha-D-muramoyl-L-alanyl-D-glutamate. An N6-carboxylysine modification is found at Lys-226. Meso-2,6-diaminopimelate is bound by residues Arg-401, Asp-425–Arg-428, Gly-476, and Glu-480. Residues Asp-425 to Arg-428 carry the Meso-diaminopimelate recognition motif motif.

Belongs to the MurCDEF family. MurE subfamily. Requires Mg(2+) as cofactor. Carboxylation is probably crucial for Mg(2+) binding and, consequently, for the gamma-phosphate positioning of ATP.

The protein resides in the cytoplasm. The enzyme catalyses UDP-N-acetyl-alpha-D-muramoyl-L-alanyl-D-glutamate + meso-2,6-diaminopimelate + ATP = UDP-N-acetyl-alpha-D-muramoyl-L-alanyl-gamma-D-glutamyl-meso-2,6-diaminopimelate + ADP + phosphate + H(+). Its pathway is cell wall biogenesis; peptidoglycan biosynthesis. Catalyzes the addition of meso-diaminopimelic acid to the nucleotide precursor UDP-N-acetylmuramoyl-L-alanyl-D-glutamate (UMAG) in the biosynthesis of bacterial cell-wall peptidoglycan. The sequence is that of UDP-N-acetylmuramoyl-L-alanyl-D-glutamate--2,6-diaminopimelate ligase from Prochlorococcus marinus (strain NATL1A).